The chain runs to 557 residues: Urocanate hydratase (557 aa).

Residues 52–53 (GG), glutamine 130, 176–178 (GMG), glutamate 196, 242–243 (NA), 263–267 (QTSAH), 273–274 (YL), and tyrosine 322 each bind NAD(+). Residue cysteine 410 is part of the active site. NAD(+) is bound at residue glycine 492.

Belongs to the urocanase family. Requires NAD(+) as cofactor.

The protein localises to the cytoplasm. The enzyme catalyses 4-imidazolone-5-propanoate = trans-urocanate + H2O. It participates in amino-acid degradation; L-histidine degradation into L-glutamate; N-formimidoyl-L-glutamate from L-histidine: step 2/3. Its function is as follows. Catalyzes the conversion of urocanate to 4-imidazolone-5-propionate. The polypeptide is Urocanate hydratase (Rhizobium meliloti (strain 1021) (Ensifer meliloti)).